Reading from the N-terminus, the 279-residue chain is Diaminopimelate epimerase (279 aa).

Substrate contacts are provided by Asn-12, Gln-45, and Asn-65. The Proton donor role is filled by Cys-74. Substrate contacts are provided by residues 75–76 (GN), Asn-162, Asn-195, and 213–214 (ER). Cys-222 acts as the Proton acceptor in catalysis. Residue 223 to 224 (GT) participates in substrate binding.

The protein belongs to the diaminopimelate epimerase family. As to quaternary structure, homodimer.

The protein localises to the cytoplasm. The enzyme catalyses (2S,6S)-2,6-diaminopimelate = meso-2,6-diaminopimelate. It participates in amino-acid biosynthesis; L-lysine biosynthesis via DAP pathway; DL-2,6-diaminopimelate from LL-2,6-diaminopimelate: step 1/1. Functionally, catalyzes the stereoinversion of LL-2,6-diaminopimelate (L,L-DAP) to meso-diaminopimelate (meso-DAP), a precursor of L-lysine and an essential component of the bacterial peptidoglycan. The polypeptide is Diaminopimelate epimerase (Shewanella woodyi (strain ATCC 51908 / MS32)).